The sequence spans 419 residues: Interferon regulatory factor 3 (419 aa).

The residue at position 3 (Thr-3) is a Phosphothreonine. Residues 5 to 111 (KPRILPWLVS…DPHKVYEFVT (107 aa)) constitute a DNA-binding region (IRF tryptophan pentad repeat). Ser-14 carries the post-translational modification Phosphoserine. The residue at position 75 (Thr-75) is a Phosphothreonine. 3 positions are modified to phosphoserine: Ser-97, Ser-123, and Ser-135. The segment at 140–419 (PKLFDGLILG…DMDFQATGNI (280 aa)) is mediates interaction with ZDHHC11. Residue Lys-188 forms a Glycyl lysine isopeptide (Lys-Gly) (interchain with G-Cter in ISG15) linkage. The segment at 194 to 353 (EQWEFEVTAF…MWPQDQPWVK (160 aa)) is interaction with HERC5. Phosphothreonine is present on residues Thr-230, Thr-237, and Thr-246. Residues Lys-353 and Lys-359 each participate in a glycyl lysine isopeptide (Lys-Gly) (interchain with G-Cter in ISG15) cross-link. Lys-359 is modified (N6-acetyllysine). Ser-378 carries the post-translational modification Phosphoserine. Ser-379 carries the post-translational modification Diphosphoserine. The residue at position 379 (Ser-379) is a Phosphoserine; by TBK1. The residue at position 388 (Ser-388) is a Phosphoserine; by IKKE. The residue at position 390 (Ser-390) is a Phosphoserine. Thr-396 carries the phosphothreonine modification.

This sequence belongs to the IRF family. As to quaternary structure, monomer. Homodimer; phosphorylation-induced. Interacts (when phosphorylated) with CREBBP. Interacts with MAVS (via phosphorylated pLxIS motif). Interacts with TICAM1 (via phosphorylated pLxIS motif). Interacts with STING1 (via phosphorylated pLxIS motif). Interacts with IKBKE and TBK1. Interacts with TICAM2. Interacts with RBCK1. Interacts with HERC5. Interacts with DDX3X; the interaction allows the phosphorylation and activation of IRF3 by IKBKE. Interacts with TRIM21 and ULK1, in the presence of TRIM21; this interaction leads to IRF3 degradation by autophagy. Interacts with RIOK3; RIOK3 probably mediates the interaction of TBK1 with IRF3. Interacts with ILRUN; the interaction inhibits IRF3 binding to its DNA consensus sequence. Interacts with LYAR; this interaction impairs IRF3 DNA-binding activity. Interacts with TRAF3. Interacts with ZDHHC11; ZDHHC11 recruits IRF3 to STING1 upon DNA virus infection and thereby promotes IRF3 activation. Interacts with HSP90AA1; the interaction mediates IRF3 association with TOMM70. Interacts with BCL2; the interaction decreases upon Sendai virus infection. Interacts with BAX; the interaction is direct, increases upon virus infection and mediates the formation of the apoptosis complex TOMM70:HSP90AA1:IRF3:BAX. Interacts with DDX56. Interacts with NBR1. In terms of processing, constitutively phosphorylated on many Ser/Thr residues. Activated following phosphorylation by TBK1 and IKBKE. Innate adapter proteins, such as MAVS, STING1 or TICAM1, are first activated by viral RNA, cytosolic DNA, and bacterial lipopolysaccharide (LPS), respectively, leading to activation of the kinases TBK1 and IKBKE. These kinases then phosphorylate the adapter proteins on the pLxIS motif, leading to recruitment of IRF3, thereby licensing IRF3 for phosphorylation by TBK1. Phosphorylation at Ser-379 is followed by pyrophosphorylation at the same residue, promoting phosphorylation at Ser-388. Phosphorylated IRF3 dissociates from the adapter proteins, dimerizes, and then enters the nucleus to induce IFNs. Pyrophosphorylated by UAP1 following phosphorylation at Ser-379 by TBK1. Pyrophosphorylation promotes subsequent phosphorylation at Ser-388, leading to homodimerization of IRF3. Post-translationally, acetylation at Lys-359 by KAT8 inhibits recruimtent to promoters and transcription factor activity. Acetylation by KAT8 is promoted by phosphorylation at Ser-388. In terms of processing, ubiquitinated; ubiquitination involves RBCK1 leading to proteasomal degradation. Polyubiquitinated; ubiquitination involves TRIM21 leading to proteasomal degradation. Ubiquitinated by UBE3C, leading to its degradation. Deubiquitinated by USP5 on both 'Lys-48'-linked unanchored and 'Lys-63'-linked anchored polyubiquitin, leading to inhibition of anti-RNA viral innate immunity. ISGylated by HERC5 resulting in sustained IRF3 activation and in the inhibition of IRF3 ubiquitination by disrupting PIN1 binding. The phosphorylation state of IRF3 does not alter ISGylation. Post-translationally, proteolytically cleaved by apoptotic caspases during apoptosis, leading to its inactivation. Cleavage by CASP3 during virus-induced apoptosis inactivates it, preventing cytokine overproduction.

The protein resides in the cytoplasm. Its subcellular location is the nucleus. It is found in the mitochondrion. Its activity is regulated as follows. In the absence of viral infection, maintained as a monomer in an autoinhibited state. Phosphorylation by TBK1 and IKBKE disrupts this autoinhibition leading to the liberation of the DNA-binding and dimerization activities and its nuclear localization where it can activate type I IFN and ISG genes. Phosphorylation and activation follow the following steps: innate adapter proteins, such as MAVS, STING1 or TICAM1, are first activated by viral RNA, cytosolic DNA and bacterial lipopolysaccharide (LPS), respectively, leading to activation of the kinases TBK1 and IKBKE. These kinases then phosphorylate the adapter proteins on their pLxIS motif, leading to recruitment of IRF3, thereby licensing IRF3 for phosphorylation by TBK1. Phosphorylated IRF3 dissociates from the adapter proteins, dimerizes, and then enters the nucleus to induce IFNs. Key transcriptional regulator of type I interferon (IFN)-dependent immune responses which plays a critical role in the innate immune response against DNA and RNA viruses. Regulates the transcription of type I IFN genes (IFN-alpha and IFN-beta) and IFN-stimulated genes (ISG) by binding to an interferon-stimulated response element (ISRE) in their promoters. Acts as a more potent activator of the IFN-beta (IFNB) gene than the IFN-alpha (IFNA) gene and plays a critical role in both the early and late phases of the IFNA/B gene induction. Found in an inactive form in the cytoplasm of uninfected cells and following viral infection, double-stranded RNA (dsRNA), or toll-like receptor (TLR) signaling, is phosphorylated by IKBKE and TBK1 kinases. This induces a conformational change, leading to its dimerization and nuclear localization and association with CREB binding protein (CREBBP) to form dsRNA-activated factor 1 (DRAF1), a complex which activates the transcription of the type I IFN and ISG genes. Can activate distinct gene expression programs in macrophages and can induce significant apoptosis in primary macrophages. This is Interferon regulatory factor 3 (Irf3) from Mus musculus (Mouse).